Here is a 441-residue protein sequence, read N- to C-terminus: Probable glycine dehydrogenase (decarboxylating) subunit 1 (441 aa).

Belongs to the GcvP family. N-terminal subunit subfamily. In terms of assembly, the glycine cleavage system is composed of four proteins: P, T, L and H. In this organism, the P 'protein' is a heterodimer of two subunits.

The catalysed reaction is N(6)-[(R)-lipoyl]-L-lysyl-[glycine-cleavage complex H protein] + glycine + H(+) = N(6)-[(R)-S(8)-aminomethyldihydrolipoyl]-L-lysyl-[glycine-cleavage complex H protein] + CO2. Its function is as follows. The glycine cleavage system catalyzes the degradation of glycine. The P protein binds the alpha-amino group of glycine through its pyridoxal phosphate cofactor; CO(2) is released and the remaining methylamine moiety is then transferred to the lipoamide cofactor of the H protein. This is Probable glycine dehydrogenase (decarboxylating) subunit 1 from Halobacterium salinarum (strain ATCC 700922 / JCM 11081 / NRC-1) (Halobacterium halobium).